We begin with the raw amino-acid sequence, 368 residues long: G-protein coupled receptor 183-A (368 aa).

The Extracellular portion of the chain corresponds to 1–27; sequence METTSANFTQNDSNVCTNLYNHRGWAQ. 2 N-linked (GlcNAc...) asparagine glycosylation sites follow: Asn-7 and Asn-11. A helical transmembrane segment spans residues 28–53; that stretch reads YFLPAMYSLICIVGLLGNVLALHVIW. Residues 54 to 73 are Cytoplasmic-facing; the sequence is PNLKKINSTTLYSANLVVSD. A helical transmembrane segment spans residues 74-91; that stretch reads ILFSLALPLRVVYYARGF. At 92 to 101 the chain is on the extracellular side; the sequence is DWPMGEGLCK. Cys-100 and Cys-178 form a disulfide bridge. Residues 102 to 123 form a helical membrane-spanning segment; it reads AVALLFYINMYAGVNFMTCLSV. Topologically, residues 124 to 145 are cytoplasmic; it reads DRFIAVVLPLRFSRFRKVQKVR. Residues 146 to 164 traverse the membrane as a helical segment; it reads YICGVVWVVVLMQTLPLLS. At 165–189 the chain is on the extracellular side; that stretch reads MPMTNIEQSGHITCMEYPNFEKIDN. Residues 190-212 form a helical membrane-spanning segment; the sequence is LPVMLIGAVVLGFGIPVITILVC. At 213–238 the chain is on the cytoplasmic side; the sequence is YTALCLKLRHLAKSNKLTEKSGRSSK. Residues 239 to 262 traverse the membrane as a helical segment; the sequence is AIGVICTVILVFVVCYSPYHVDLL. Residues 263-282 are Extracellular-facing; it reads QYMIKKLRYDPDCSELHKFQ. A helical membrane pass occupies residues 283-307; that stretch reads ISLHITVCFMNLNSCLDPFIYFFAC. The Cytoplasmic portion of the chain corresponds to 308–368; sequence KGYKKKVLKL…SSVLLNSLEQ (61 aa).

This sequence belongs to the G-protein coupled receptor 1 family.

It localises to the cell membrane. Functionally, G-protein coupled receptor expressed in lymphocytes that acts as a chemotactic receptor for B-cells, T-cells, splenic dendritic cells, monocytes/macrophages and astrocytes. Receptor for oxysterol 7-alpha,25-dihydroxycholesterol (7-alpha,25-OHC) and other related oxysterols. Mediates cell positioning and movement of a number of cells by binding the 7-alpha,25-OHC ligand that forms a chemotactic gradient. Binding of 7-alpha,25-OHC mediates the correct localization of B-cells during humoral immune responses. The polypeptide is G-protein coupled receptor 183-A (gpr183a) (Danio rerio (Zebrafish)).